A 233-amino-acid chain; its full sequence is Large ribosomal subunit protein uL1 (233 aa).

Belongs to the universal ribosomal protein uL1 family. As to quaternary structure, part of the 50S ribosomal subunit.

Its function is as follows. Binds directly to 23S rRNA. The L1 stalk is quite mobile in the ribosome, and is involved in E site tRNA release. Functionally, protein L1 is also a translational repressor protein, it controls the translation of the L11 operon by binding to its mRNA. The protein is Large ribosomal subunit protein uL1 of Parvibaculum lavamentivorans (strain DS-1 / DSM 13023 / NCIMB 13966).